Here is a 272-residue protein sequence, read N- to C-terminus: MLNADHLHVARDGRAILNDLSIRIAPGCVTALLGRNGAGKSTLLGVLAGDLPAGGLARGATVRGGVALNGEPLHAIDAPRLARLRAVLPQASRPAFAFSAREIVLLGRYPHARRAGALTHADGEIASQALALAGATALDARDVTTLSGGELARVQFARVLAQLWPPPGAAQPPRYLLLDEPTAALDLAHQHQLLDTVRRLSRDWNLGVLTIVHDPNLAARHADRIAMLADGAIVAQGAPADVLRPEPIARCYGFRVRLVDAGDGVAPVIVPA.

One can recognise an ABC transporter domain in the interval 2–255 (LNADHLHVAR…EPIARCYGFR (254 aa)). Position 34–41 (34–41 (GRNGAGKS)) interacts with ATP.

It belongs to the ABC transporter superfamily. Heme (hemin) importer (TC 3.A.1.14.5) family. The complex is composed of two ATP-binding proteins (HmuV), two transmembrane proteins (HmuU) and a solute-binding protein (HmuT).

It localises to the cell inner membrane. In terms of biological role, part of the ABC transporter complex HmuTUV involved in hemin import. Responsible for energy coupling to the transport system. The sequence is that of Hemin import ATP-binding protein HmuV from Burkholderia mallei (strain ATCC 23344).